The primary structure comprises 352 residues: UDP-N-acetylglucosamine--N-acetylmuramyl-(pentapeptide) pyrophosphoryl-undecaprenol N-acetylglucosamine transferase 2 (352 aa).

Residues 11–13, Arg164, Ser194, and Gln289 each bind UDP-N-acetyl-alpha-D-glucosamine; that span reads SAG.

It belongs to the glycosyltransferase 28 family. MurG subfamily.

It is found in the cell membrane. The enzyme catalyses di-trans,octa-cis-undecaprenyl diphospho-N-acetyl-alpha-D-muramoyl-L-alanyl-D-glutamyl-meso-2,6-diaminopimeloyl-D-alanyl-D-alanine + UDP-N-acetyl-alpha-D-glucosamine = di-trans,octa-cis-undecaprenyl diphospho-[N-acetyl-alpha-D-glucosaminyl-(1-&gt;4)]-N-acetyl-alpha-D-muramoyl-L-alanyl-D-glutamyl-meso-2,6-diaminopimeloyl-D-alanyl-D-alanine + UDP + H(+). It participates in cell wall biogenesis; peptidoglycan biosynthesis. Its function is as follows. Cell wall formation. Catalyzes the transfer of a GlcNAc subunit on undecaprenyl-pyrophosphoryl-MurNAc-pentapeptide (lipid intermediate I) to form undecaprenyl-pyrophosphoryl-MurNAc-(pentapeptide)GlcNAc (lipid intermediate II). This Bacillus thuringiensis subsp. konkukian (strain 97-27) protein is UDP-N-acetylglucosamine--N-acetylmuramyl-(pentapeptide) pyrophosphoryl-undecaprenol N-acetylglucosamine transferase 2.